The primary structure comprises 116 residues: Ribonuclease P protein component (116 aa).

Belongs to the RnpA family. As to quaternary structure, consists of a catalytic RNA component (M1 or rnpB) and a protein subunit.

It catalyses the reaction Endonucleolytic cleavage of RNA, removing 5'-extranucleotides from tRNA precursor.. RNaseP catalyzes the removal of the 5'-leader sequence from pre-tRNA to produce the mature 5'-terminus. It can also cleave other RNA substrates such as 4.5S RNA. The protein component plays an auxiliary but essential role in vivo by binding to the 5'-leader sequence and broadening the substrate specificity of the ribozyme. This Bacillus velezensis (strain DSM 23117 / BGSC 10A6 / LMG 26770 / FZB42) (Bacillus amyloliquefaciens subsp. plantarum) protein is Ribonuclease P protein component.